Consider the following 127-residue polypeptide: Lymphocyte antigen 6D (127 aa).

The N-terminal stretch at Met-1–Ala-20 is a signal peptide. Positions Leu-21–Ser-108 constitute a UPAR/Ly6 domain. 5 disulfide bridges follow: Cys-23–Cys-45, Cys-26–Cys-32, Cys-38–Cys-63, Cys-67–Cys-86, and Cys-87–Cys-92. A lipid anchor (GPI-anchor amidated serine) is attached at Ser-98. A propeptide spans Ala-99–Leu-127 (removed in mature form).

As to expression, lymphoid cells lacking Ly6d, called ALP (all-lymphoid progenitor), retain full lymphoid potential and early thymic seeding activity, whereas cells containing Ly6d, called BLP (B-cell-biased lymphoid progenitor), up-regulate the B-cell specifying factors Ebf1 and Pax5 and behave essentially as B-cell progenitors (at protein level). Thymocytes and B-cells.

It is found in the cell membrane. In terms of biological role, may act as a specification marker at earliest stage specification of lymphocytes between B- and T-cell development. Marks the earliest stage of B-cell specification. The polypeptide is Lymphocyte antigen 6D (Ly6d) (Mus musculus (Mouse)).